The chain runs to 328 residues: Beta-ketoacyl-[acyl-carrier-protein] synthase III (328 aa).

Residues cysteine 113 and histidine 253 contribute to the active site. The tract at residues glutamine 254–arginine 258 is ACP-binding. The active site involves asparagine 283.

Belongs to the thiolase-like superfamily. FabH family. In terms of assembly, homodimer.

Its subcellular location is the cytoplasm. The catalysed reaction is malonyl-[ACP] + acetyl-CoA + H(+) = 3-oxobutanoyl-[ACP] + CO2 + CoA. Its pathway is lipid metabolism; fatty acid biosynthesis. In terms of biological role, catalyzes the condensation reaction of fatty acid synthesis by the addition to an acyl acceptor of two carbons from malonyl-ACP. Catalyzes the first condensation reaction which initiates fatty acid synthesis and may therefore play a role in governing the total rate of fatty acid production. Possesses both acetoacetyl-ACP synthase and acetyl transacylase activities. Its substrate specificity determines the biosynthesis of branched-chain and/or straight-chain of fatty acids. This Fusobacterium nucleatum subsp. nucleatum (strain ATCC 25586 / DSM 15643 / BCRC 10681 / CIP 101130 / JCM 8532 / KCTC 2640 / LMG 13131 / VPI 4355) protein is Beta-ketoacyl-[acyl-carrier-protein] synthase III.